A 249-amino-acid polypeptide reads, in one-letter code: MSDEQTTHFGYEKVDVKDKARRVAGVFHSVAAKYDIMNDVMSGGIHRIWKQFTIELSGVRSGHKVLDIAGGTGDLTKKFSRIVGPTGQVVLADINESMLNVGRDKLIDSGVAGNVVYTQADAQYLPFPDNTFDCITIAFGLRNVTDKDLAIASMLRVLKPGGRLLILEFTKPQNALVEKAYDFYSFKILPTMGQIIAQDADSYRYLAESIRMHPDQETLKGMMDAAGFAQTKYHNMTGGIVALHTGIKP.

Residues Thr-72, Asp-93, and 121–122 (DA) contribute to the S-adenosyl-L-methionine site.

This sequence belongs to the class I-like SAM-binding methyltransferase superfamily. MenG/UbiE family.

It catalyses the reaction a 2-demethylmenaquinol + S-adenosyl-L-methionine = a menaquinol + S-adenosyl-L-homocysteine + H(+). It carries out the reaction a 2-methoxy-6-(all-trans-polyprenyl)benzene-1,4-diol + S-adenosyl-L-methionine = a 5-methoxy-2-methyl-3-(all-trans-polyprenyl)benzene-1,4-diol + S-adenosyl-L-homocysteine + H(+). It participates in quinol/quinone metabolism; menaquinone biosynthesis; menaquinol from 1,4-dihydroxy-2-naphthoate: step 2/2. It functions in the pathway cofactor biosynthesis; ubiquinone biosynthesis. Methyltransferase required for the conversion of demethylmenaquinol (DMKH2) to menaquinol (MKH2) and the conversion of 2-polyprenyl-6-methoxy-1,4-benzoquinol (DDMQH2) to 2-polyprenyl-3-methyl-6-methoxy-1,4-benzoquinol (DMQH2). The polypeptide is Ubiquinone/menaquinone biosynthesis C-methyltransferase UbiE (Saccharophagus degradans (strain 2-40 / ATCC 43961 / DSM 17024)).